The following is a 100-amino-acid chain: Urease subunit gamma (100 aa).

This sequence belongs to the urease gamma subunit family. In terms of assembly, heterotrimer of UreA (gamma), UreB (beta) and UreC (alpha) subunits. Three heterotrimers associate to form the active enzyme.

It is found in the cytoplasm. It catalyses the reaction urea + 2 H2O + H(+) = hydrogencarbonate + 2 NH4(+). It functions in the pathway nitrogen metabolism; urea degradation; CO(2) and NH(3) from urea (urease route): step 1/1. In Cupriavidus taiwanensis (strain DSM 17343 / BCRC 17206 / CCUG 44338 / CIP 107171 / LMG 19424 / R1) (Ralstonia taiwanensis (strain LMG 19424)), this protein is Urease subunit gamma.